Here is a 161-residue protein sequence, read N- to C-terminus: MELYECIQDIFGGLKNPSVKDLATSLKQIPNAAKLSQPYIKEPDQYAYGRNAIYRNNELEIIVINIPPNKETTVHDHGQSIGCAMVLEGKLLNSIYRSTGEHAELSNSYFVHEGECLISTKGLIHKMSNPTSERMVSLHVYSPPLEDMTVFEEQKEVLENS.

Fe cation contacts are provided by H75, H77, and H125.

The protein belongs to the cysteine dioxygenase family. Fe cation is required as a cofactor.

It catalyses the reaction L-cysteine + O2 = 3-sulfino-L-alanine + H(+). This Bacillus subtilis (strain 168) protein is Cysteine dioxygenase (cdoA).